Consider the following 101-residue polypeptide: Small ribosomal subunit protein bS6 (101 aa).

The protein belongs to the bacterial ribosomal protein bS6 family.

In terms of biological role, binds together with bS18 to 16S ribosomal RNA. The protein is Small ribosomal subunit protein bS6 of Staphylococcus saprophyticus subsp. saprophyticus (strain ATCC 15305 / DSM 20229 / NCIMB 8711 / NCTC 7292 / S-41).